The chain runs to 242 residues: Ubiquinone biosynthesis O-methyltransferase (242 aa).

Arg44, Gly64, Asp85, and Met129 together coordinate S-adenosyl-L-methionine.

The protein belongs to the methyltransferase superfamily. UbiG/COQ3 family.

It carries out the reaction a 3-demethylubiquinol + S-adenosyl-L-methionine = a ubiquinol + S-adenosyl-L-homocysteine + H(+). The catalysed reaction is a 3-(all-trans-polyprenyl)benzene-1,2-diol + S-adenosyl-L-methionine = a 2-methoxy-6-(all-trans-polyprenyl)phenol + S-adenosyl-L-homocysteine + H(+). Its pathway is cofactor biosynthesis; ubiquinone biosynthesis. In terms of biological role, O-methyltransferase that catalyzes the 2 O-methylation steps in the ubiquinone biosynthetic pathway. The protein is Ubiquinone biosynthesis O-methyltransferase of Salmonella choleraesuis (strain SC-B67).